The following is a 276-amino-acid chain: Transcriptional antiactivator ExsD (276 aa).

Can form homotrimer. Interacts with ExsA; this interaction inhibits ExsA activity. Interacts with ExsC; this interaction dissociates the ExsD-ExsA complex.

Negative regulator of the type III secretion system regulon. Acts by disrupting transcriptional activator ExsA self-association and DNA-binding activity in absence of inducing signals. Upon host cell contact, this interaction is disrupted by the anti-antiactivator protein ExsC leading to ExsA activation. The chain is Transcriptional antiactivator ExsD (exsD) from Pseudomonas aeruginosa (strain ATCC 15692 / DSM 22644 / CIP 104116 / JCM 14847 / LMG 12228 / 1C / PRS 101 / PAO1).